The sequence spans 285 residues: Proteasome subunit beta (285 aa).

The propeptide at 1-50 is removed in mature form; by autocatalysis; the sequence is MTAEHPARLPQAFMTPGSSSFVDFLAAHDPSLLPSSRALPAGSAPPAPHG. T51 acts as the Nucleophile in catalysis. The interval 266-285 is disordered; the sequence is RTRQARSSRSRHGSLGGDLR.

The protein belongs to the peptidase T1B family. In terms of assembly, the 20S proteasome core is composed of 14 alpha and 14 beta subunits that assemble into four stacked heptameric rings, resulting in a barrel-shaped structure. The two inner rings, each composed of seven catalytic beta subunits, are sandwiched by two outer rings, each composed of seven alpha subunits. The catalytic chamber with the active sites is on the inside of the barrel. Has a gated structure, the ends of the cylinder being occluded by the N-termini of the alpha-subunits. Is capped by the proteasome-associated ATPase, ARC.

The protein localises to the cytoplasm. It catalyses the reaction Cleavage of peptide bonds with very broad specificity.. Its pathway is protein degradation; proteasomal Pup-dependent pathway. With respect to regulation, the formation of the proteasomal ATPase ARC-20S proteasome complex, likely via the docking of the C-termini of ARC into the intersubunit pockets in the alpha-rings, may trigger opening of the gate for substrate entry. Interconversion between the open-gate and close-gate conformations leads to a dynamic regulation of the 20S proteasome proteolysis activity. Component of the proteasome core, a large protease complex with broad specificity involved in protein degradation. This Sanguibacter keddieii (strain ATCC 51767 / DSM 10542 / NCFB 3025 / ST-74) protein is Proteasome subunit beta.